The sequence spans 197 residues: MLERIKDSFTESIQTKIDAAEALPESIAKAAEMMVQCLLGGNKILACGNGGSAGDAQHFSAELLNRYEIERPPLPAIALSTDTSTITAIANDYSYDEIFSKQILALGQPGDILLAISTSGNSGNVIKAMEAALSRDMTIVALTGKDGGAMAGLLSVGDVEIRVPSNVTARIQEVHLLVIHCLCDNIDRTLFPQDEQQ.

Residues 34–196 (MVQCLLGGNK…DRTLFPQDEQ (163 aa)) form the SIS domain. 49-51 (NGG) lines the substrate pocket. H58 and E62 together coordinate Zn(2+). Residues E62, 91-92 (ND), 117-119 (STS), S122, and Q172 each bind substrate. Q172 and H180 together coordinate Zn(2+).

It belongs to the SIS family. GmhA subfamily. Homotetramer. Requires Zn(2+) as cofactor.

The protein resides in the cytoplasm. The enzyme catalyses 2 D-sedoheptulose 7-phosphate = D-glycero-alpha-D-manno-heptose 7-phosphate + D-glycero-beta-D-manno-heptose 7-phosphate. The protein operates within carbohydrate biosynthesis; D-glycero-D-manno-heptose 7-phosphate biosynthesis; D-glycero-alpha-D-manno-heptose 7-phosphate and D-glycero-beta-D-manno-heptose 7-phosphate from sedoheptulose 7-phosphate: step 1/1. Functionally, catalyzes the isomerization of sedoheptulose 7-phosphate in D-glycero-D-manno-heptose 7-phosphate. The chain is Phosphoheptose isomerase from Shewanella oneidensis (strain ATCC 700550 / JCM 31522 / CIP 106686 / LMG 19005 / NCIMB 14063 / MR-1).